A 216-amino-acid polypeptide reads, in one-letter code: Cytosolic-abundant heat soluble protein 2 (216 aa).

Polar residues predominate over residues 1–11; the sequence is MSRDQGSTEYD. Disordered stretches follow at residues 1–34 and 66–91; these read MSRD…DVRT and RISG…KDRE. Residues 12 to 22 show a composition bias toward basic and acidic residues; it reads ANQRQEQHQEQ. 2 stretches are compositionally biased toward polar residues: residues 25 to 34 and 68 to 77; these read TSYTHTDVRT and SGQSSETHVQ. Residues 81 to 180 are a coiled coil; the sequence is EMEAEARKDR…ARLATQALDQ (100 aa). CAHS motif regions lie at residues 115–133 and 152–170; these read YRKQ…LEKQ and QKRQ…LDRE.

The protein belongs to the Cytosolic-abundant heat soluble protein (CAHS) family.

It localises to the cytoplasm. In terms of biological role, CAHS proteins are cytosolic heat soluble proteins that seem to contribute to the anhydrobiosis in tardigrades, but their specific mechanisms are yet to be identified. It is possible that protection during anhydrobiosis might occur via the stabilization of vitrifying small molecules such as sugars, but not via the direct glass transition of CAHS proteins themselves. The polypeptide is Cytosolic-abundant heat soluble protein 2 (Ramazzottius varieornatus (Water bear)).